Consider the following 432-residue polypeptide: Adenylosuccinate synthetase (432 aa).

Residues 12–18 (GDEGKGK) and 40–42 (GHT) each bind GTP. Asp-13 acts as the Proton acceptor in catalysis. 2 residues coordinate Mg(2+): Asp-13 and Gly-40. Residues 13–16 (DEGK), 38–41 (NAGH), Thr-132, Arg-146, Gln-226, Thr-241, and Arg-305 each bind IMP. The active-site Proton donor is His-41. Residue 301-307 (TVTGRKR) participates in substrate binding. GTP-binding positions include Arg-307, 333 to 335 (KLD), and 415 to 417 (STS).

It belongs to the adenylosuccinate synthetase family. In terms of assembly, homodimer. Requires Mg(2+) as cofactor.

It localises to the cytoplasm. The catalysed reaction is IMP + L-aspartate + GTP = N(6)-(1,2-dicarboxyethyl)-AMP + GDP + phosphate + 2 H(+). Its pathway is purine metabolism; AMP biosynthesis via de novo pathway; AMP from IMP: step 1/2. Functionally, plays an important role in the de novo pathway of purine nucleotide biosynthesis. Catalyzes the first committed step in the biosynthesis of AMP from IMP. The sequence is that of Adenylosuccinate synthetase from Sinorhizobium medicae (strain WSM419) (Ensifer medicae).